Consider the following 1534-residue polypeptide: Alpha-2-macroglobulin homolog (1534 aa).

The signal sequence occupies residues 1–38 (MDTQRFQSQFHWHLSFKFSGAIAACLSLSLVGTGLANA).

It belongs to the protease inhibitor I39 (alpha-2-macroglobulin) family. Bacterial alpha-2-macroglobulin subfamily.

The chain is Alpha-2-macroglobulin homolog (yfaS) from Escherichia coli O157:H7.